The sequence spans 492 residues: Peptidyl-prolyl cis-trans isomerase-like 4 (492 aa).

Residues 1 to 161 (MAVLLETTLG…QDIRINHTVI (161 aa)) form the PPIase cyclophilin-type domain. Residues 167-188 (DDPPDLLIPDRSPEPTKEQLDS) form a disordered region. Over residues 177 to 187 (RSPEPTKEQLD) the composition is skewed to basic and acidic residues. The residue at position 178 (Ser-178) is a Phosphoserine. Thr-182 carries the phosphothreonine modification. Residues Lys-201, Lys-212, and Lys-218 each participate in a glycyl lysine isopeptide (Lys-Gly) (interchain with G-Cter in SUMO2) cross-link. Residues 240-318 (NVLFVCKLNP…RRIHVDFSQS (79 aa)) form the RRM domain. Residues Lys-321 and Lys-362 each participate in a glycyl lysine isopeptide (Lys-Gly) (interchain with G-Cter in SUMO2) cross-link. Disordered regions lie at residues 368–409 (DEQG…NPNQ) and 423–492 (EESC…SKYR). A compositionally biased stretch (basic residues) spans 377–390 (SHSHTSKKHKKKTR). Ser-393 carries the post-translational modification Phosphoserine. Lys-405 is covalently cross-linked (Glycyl lysine isopeptide (Lys-Gly) (interchain with G-Cter in SUMO2)). Residues 426–436 (CWEKQKNEKRD) are compositionally biased toward basic and acidic residues. Lys-460 is covalently cross-linked (Glycyl lysine isopeptide (Lys-Gly) (interchain with G-Cter in SUMO2)). Ser-471 is modified (phosphoserine). Over residues 473-485 (KRDRSRSPKKSKA) the composition is skewed to basic residues.

Belongs to the cyclophilin-type PPIase family. PPIL4 subfamily.

The protein resides in the nucleus. It carries out the reaction [protein]-peptidylproline (omega=180) = [protein]-peptidylproline (omega=0). PPIases accelerate the folding of proteins. It catalyzes the cis-trans isomerization of proline imidic peptide bonds in oligopeptides. In Mus musculus (Mouse), this protein is Peptidyl-prolyl cis-trans isomerase-like 4 (Ppil4).